The sequence spans 26 residues: GTP-binding protein Rheb (26 aa).

S1, S2, V13, Y16, and T19 together coordinate GTP. Position 1 (S1) interacts with Mg(2+). Positions 16-24 (YDPTIENTF) match the Effector region motif. T19 serves as a coordination point for Mg(2+).

Belongs to the small GTPase superfamily. Rheb family.

The catalysed reaction is GTP + H2O = GDP + phosphate + H(+). Functionally, binds GTP and exhibits intrinsic GTPase activity. The protein is GTP-binding protein Rheb of Crocodylus siamensis (Siamese crocodile).